A 341-amino-acid polypeptide reads, in one-letter code: DNA repair protein XRCC3 (341 aa).

Met-1 bears the N-acetylmethionine mark. ATP is bound at residue 107-114; the sequence is GRSSAGKT.

The protein belongs to the RecA family. RAD51 subfamily. Interacts with RAD51C and RAD51. Part of the CX3 complex consisting of RAD51C and XRCC3; the complex has a ring-like structure arranged into a flat disc around a central channel; CX3 can interact with RAD51 in vitro. Forms a complex with FANCD2, BRCA2 and phosphorylated FANCG. Interacts with SWSAP1 and ZSWIM7; involved in homologous recombination repair. Interacts directly with PALB2 which may serve as a scaffold for a HR complex containing PALB2, BRCA2, RAD51C, RAD51 and XRCC3.

The protein localises to the nucleus. It is found in the cytoplasm. It localises to the perinuclear region. The protein resides in the mitochondrion matrix. In terms of biological role, involved in the homologous recombination repair (HRR) pathway of double-stranded DNA, thought to repair chromosomal fragmentation, translocations and deletions. Part of the RAD21 paralog protein complex CX3 which acts in the BRCA1-BRCA2-dependent HR pathway. Upon DNA damage, CX3 acts downstream of RAD51 recruitment; the complex binds predominantly to the intersection of the four duplex arms of the Holliday junction (HJ) and to junctions of replication forks. Involved in HJ resolution and thus in processing HR intermediates late in the DNA repair process; the function may be linked to the CX3 complex and seems to involve GEN1 during mitotic cell cycle progression. Part of a PALB2-scaffolded HR complex containing BRCA2 and RAD51C and which is thought to play a role in DNA repair by HR. Plays a role in regulating mitochondrial DNA copy number under conditions of oxidative stress in the presence of RAD51 and RAD51C. This Bos taurus (Bovine) protein is DNA repair protein XRCC3 (XRCC3).